The sequence spans 164 residues: Disulfide bond formation protein B (164 aa).

Residues 1 to 9 (MTLPSARTC) lie on the Cytoplasmic side of the membrane. The chain crosses the membrane as a helical span at residues 10–26 (FLLGFLFCAALLAAALY). The Periplasmic segment spans residues 27-44 (FQFSGGLEPCPLCISQRI). A disulfide bridge links C36 with C39. A helical membrane pass occupies residues 45-61 (MVLAVALVFLAAAIHHP). At 62 to 68 (ASLGIRA) the chain is on the cytoplasmic side. A helical transmembrane segment spans residues 69-85 (YALLGTAVALGGASISG). Residues 86-142 (RHVWLLHLPPEEVPECGPGLSYMFRNFPLGDTLKAMLSGTGDCAKVDWTFLGLSMPA) lie on the Periplasmic side of the membrane. C101 and C128 are disulfide-bonded. The chain crosses the membrane as a helical span at residues 143-161 (WVLICFLGLGAFSLLQWWN). Residues 162–164 (AER) lie on the Cytoplasmic side of the membrane.

It belongs to the DsbB family.

It localises to the cell inner membrane. Functionally, required for disulfide bond formation in some periplasmic proteins. Acts by oxidizing the DsbA protein. In Methylococcus capsulatus (strain ATCC 33009 / NCIMB 11132 / Bath), this protein is Disulfide bond formation protein B.